The sequence spans 86 residues: MKTLLLTLVVLTIACLDLGYTKTCFNDDLTNPKTTELCRHSVYFCFKNSWIAGGVERIERGCSLTCPDIKYNGKYIYCCTRDNCNA.

A signal peptide spans 1–21 (MKTLLLTLVVLTIACLDLGYT). Cystine bridges form between C24–C45, C38–C62, C66–C78, and C79–C84.

The protein belongs to the three-finger toxin family. Short-chain subfamily. Orphan group IX sub-subfamily. Expressed by the venom gland.

The protein localises to the secreted. The polypeptide is Neurotoxin-like protein pMD18-NTL3 (Bungarus multicinctus (Many-banded krait)).